Here is a 329-residue protein sequence, read N- to C-terminus: Glycerol-3-phosphate dehydrogenase [NAD(P)+] (329 aa).

The NADPH site is built by Ser13, Trp14, His34, and Lys105. Positions 105, 134, and 136 each coordinate sn-glycerol 3-phosphate. NADPH is bound at residue Ala138. The sn-glycerol 3-phosphate site is built by Lys189, Asp242, Ser252, Arg253, and Asn254. The active-site Proton acceptor is Lys189. Residue Arg253 participates in NADPH binding. NADPH is bound by residues Val277 and Glu279.

The protein belongs to the NAD-dependent glycerol-3-phosphate dehydrogenase family.

It is found in the cytoplasm. The catalysed reaction is sn-glycerol 3-phosphate + NAD(+) = dihydroxyacetone phosphate + NADH + H(+). It catalyses the reaction sn-glycerol 3-phosphate + NADP(+) = dihydroxyacetone phosphate + NADPH + H(+). It participates in membrane lipid metabolism; glycerophospholipid metabolism. In terms of biological role, catalyzes the reduction of the glycolytic intermediate dihydroxyacetone phosphate (DHAP) to sn-glycerol 3-phosphate (G3P), the key precursor for phospholipid synthesis. The sequence is that of Glycerol-3-phosphate dehydrogenase [NAD(P)+] from Legionella pneumophila (strain Lens).